A 224-amino-acid chain; its full sequence is Thymidine kinase (224 aa).

Residues 19-26 (GPMFAGKT) and 93-96 (DEVQ) contribute to the ATP site. Residue Glu-94 is the Proton acceptor of the active site. Positions 150, 153, 188, and 191 each coordinate Zn(2+).

This sequence belongs to the thymidine kinase family. Homotetramer.

The protein resides in the cytoplasm. It carries out the reaction thymidine + ATP = dTMP + ADP + H(+). This is Thymidine kinase from Mycoplasmoides gallisepticum (strain R(low / passage 15 / clone 2)) (Mycoplasma gallisepticum).